Reading from the N-terminus, the 116-residue chain is Nucleoid-associated protein PMM0020 (116 aa).

Positions 87–98 (ESSTTTMKERMN) are enriched in basic and acidic residues. The interval 87-116 (ESSTTTMKERMNDLTGGLNLNLPGLDNNDS) is disordered. Low complexity predominate over residues 99–116 (DLTGGLNLNLPGLDNNDS).

It belongs to the YbaB/EbfC family. As to quaternary structure, homodimer.

It localises to the cytoplasm. The protein localises to the nucleoid. Functionally, binds to DNA and alters its conformation. May be involved in regulation of gene expression, nucleoid organization and DNA protection. This is Nucleoid-associated protein PMM0020 from Prochlorococcus marinus subsp. pastoris (strain CCMP1986 / NIES-2087 / MED4).